Reading from the N-terminus, the 405-residue chain is Imidazolonepropionase (405 aa).

The Fe(3+) site is built by His-72 and His-74. Zn(2+) is bound by residues His-72 and His-74. 4-imidazolone-5-propanoate-binding residues include Arg-81, Tyr-144, and His-177. Position 144 (Tyr-144) interacts with N-formimidoyl-L-glutamate. His-242 provides a ligand contact to Fe(3+). A Zn(2+)-binding site is contributed by His-242. 4-imidazolone-5-propanoate is bound at residue Gln-245. Asp-317 serves as a coordination point for Fe(3+). Position 317 (Asp-317) interacts with Zn(2+). The N-formimidoyl-L-glutamate site is built by Asn-319 and Gly-321. Thr-322 provides a ligand contact to 4-imidazolone-5-propanoate.

It belongs to the metallo-dependent hydrolases superfamily. HutI family. Requires Zn(2+) as cofactor. It depends on Fe(3+) as a cofactor.

It is found in the cytoplasm. It catalyses the reaction 4-imidazolone-5-propanoate + H2O = N-formimidoyl-L-glutamate. It participates in amino-acid degradation; L-histidine degradation into L-glutamate; N-formimidoyl-L-glutamate from L-histidine: step 3/3. In terms of biological role, catalyzes the hydrolytic cleavage of the carbon-nitrogen bond in imidazolone-5-propanoate to yield N-formimidoyl-L-glutamate. It is the third step in the universal histidine degradation pathway. This chain is Imidazolonepropionase, found in Klebsiella pneumoniae (strain 342).